The sequence spans 130 residues: Small ribosomal subunit protein uS9 (130 aa).

It belongs to the universal ribosomal protein uS9 family.

This is Small ribosomal subunit protein uS9 from Burkholderia thailandensis (strain ATCC 700388 / DSM 13276 / CCUG 48851 / CIP 106301 / E264).